Reading from the N-terminus, the 323-residue chain is Cyclin-H (323 aa).

Residues 296–323 form a disordered region; that stretch reads GYEDDGYISKKPKTEEDEWTDEDFGDSL. A compositionally biased stretch (acidic residues) spans 310 to 323; sequence EEDEWTDEDFGDSL.

It belongs to the cyclin family. Cyclin C subfamily. In terms of assembly, associates primarily with CDK7 and MAT1 to form the CAK complex. CAK can further associate with the core-TFIIH to form the TFIIH basal transcription factor.

It localises to the nucleus. Regulates CDK7, the catalytic subunit of the CDK-activating kinase (CAK) enzymatic complex. CAK activates the cyclin-associated kinases CDK1, CDK2, CDK4 and CDK6 by threonine phosphorylation. CAK complexed to the core-TFIIH basal transcription factor activates RNA polymerase II by serine phosphorylation of the repetitive C-terminal domain (CTD) of its large subunit (POLR2A), allowing its escape from the promoter and elongation of the transcripts. Involved in cell cycle control and in RNA transcription by RNA polymerase II. Its expression and activity are constant throughout the cell cycle. The polypeptide is Cyclin-H (ccnh) (Xenopus laevis (African clawed frog)).